The following is a 78-amino-acid chain: Large ribosomal subunit protein uL29 (78 aa).

The protein belongs to the universal ribosomal protein uL29 family.

The chain is Large ribosomal subunit protein uL29 from Rhodococcus opacus (strain B4).